Reading from the N-terminus, the 303-residue chain is tRNA dimethylallyltransferase 1 (303 aa).

Residue 17-24 participates in ATP binding; sequence GPTACGKT. Substrate is bound at residue 19–24; it reads TACGKT. Residues 42–45 are interaction with substrate tRNA; that stretch reads DSRQ.

Belongs to the IPP transferase family. As to quaternary structure, monomer. Requires Mg(2+) as cofactor.

The catalysed reaction is adenosine(37) in tRNA + dimethylallyl diphosphate = N(6)-dimethylallyladenosine(37) in tRNA + diphosphate. Its function is as follows. Catalyzes the transfer of a dimethylallyl group onto the adenine at position 37 in tRNAs that read codons beginning with uridine, leading to the formation of N6-(dimethylallyl)adenosine (i(6)A). The sequence is that of tRNA dimethylallyltransferase 1 from Hahella chejuensis (strain KCTC 2396).